The chain runs to 152 residues: UPF0266 membrane protein YobD (152 aa).

A run of 3 helical transmembrane segments spans residues 6 to 26, 45 to 65, and 67 to 87; these read LVLI…QFIM, VDSV…VTSH, and AQMT…IFWI.

This sequence belongs to the UPF0266 family.

It is found in the cell inner membrane. The sequence is that of UPF0266 membrane protein YobD from Salmonella newport (strain SL254).